The sequence spans 186 residues: LSM12 homolog B (186 aa).

The region spanning Met-1–Ala-74 is the Sm domain. One can recognise an AD domain in the interval Glu-84–Phe-186.

Belongs to the LSM12 family. Interacts with Sbat; along with Sbat and Vlet, may form an accessory subcomplex involved in SMN complex function.

In terms of biological role, may have an accessory function in the survival motor neuron (SMN) complex. This chain is LSM12 homolog B, found in Drosophila melanogaster (Fruit fly).